A 508-amino-acid chain; its full sequence is Photosystem II CP47 reaction center protein (508 aa).

Transmembrane regions (helical) follow at residues 21–36, 101–115, 140–156, 203–218, 237–252, and 457–472; these read AVHL…WAGS, IVLS…IWHW, GIHL…FGAF, IAAG…FHLS, VLSS…AFVV, and TFAL…HGAR.

Belongs to the PsbB/PsbC family. PsbB subfamily. In terms of assembly, PSII is composed of 1 copy each of membrane proteins PsbA, PsbB, PsbC, PsbD, PsbE, PsbF, PsbH, PsbI, PsbJ, PsbK, PsbL, PsbM, PsbT, PsbX, PsbY, PsbZ, Psb30/Ycf12, at least 3 peripheral proteins of the oxygen-evolving complex and a large number of cofactors. It forms dimeric complexes. It depends on Binds multiple chlorophylls. PSII binds additional chlorophylls, carotenoids and specific lipids. as a cofactor.

The protein localises to the plastid. The protein resides in the chloroplast thylakoid membrane. In terms of biological role, one of the components of the core complex of photosystem II (PSII). It binds chlorophyll and helps catalyze the primary light-induced photochemical processes of PSII. PSII is a light-driven water:plastoquinone oxidoreductase, using light energy to abstract electrons from H(2)O, generating O(2) and a proton gradient subsequently used for ATP formation. This is Photosystem II CP47 reaction center protein from Marchantia polymorpha (Common liverwort).